The following is a 449-amino-acid chain: Tubulin beta-8 chain (449 aa).

Glutamine 11, glutamate 69, serine 138, glycine 142, threonine 143, glycine 144, asparagine 204, and asparagine 226 together coordinate GTP. Residue glutamate 69 participates in Mg(2+) binding. Residues 428–449 (ATADEEEGYEYEEDEVEVQEEQ) are disordered. Residues 429 to 449 (TADEEEGYEYEEDEVEVQEEQ) are compositionally biased toward acidic residues.

The protein belongs to the tubulin family. Dimer of alpha and beta chains. A typical microtubule is a hollow water-filled tube with an outer diameter of 25 nm and an inner diameter of 15 nM. Alpha-beta heterodimers associate head-to-tail to form protofilaments running lengthwise along the microtubule wall with the beta-tubulin subunit facing the microtubule plus end conferring a structural polarity. Microtubules usually have 13 protofilaments but different protofilament numbers can be found in some organisms and specialized cells. It depends on Mg(2+) as a cofactor.

It is found in the cytoplasm. The protein localises to the cytoskeleton. Functionally, tubulin is the major constituent of microtubules, a cylinder consisting of laterally associated linear protofilaments composed of alpha- and beta-tubulin heterodimers. Microtubules grow by the addition of GTP-tubulin dimers to the microtubule end, where a stabilizing cap forms. Below the cap, tubulin dimers are in GDP-bound state, owing to GTPase activity of alpha-tubulin. The chain is Tubulin beta-8 chain (TUBB8) from Arabidopsis thaliana (Mouse-ear cress).